Here is a 277-residue protein sequence, read N- to C-terminus: Acyl-coenzyme A thioesterase MBLAC2 (277 aa).

7 residues coordinate Zn(2+): His80, His82, Asp84, His85, His167, Asp186, and His228.

It belongs to the metallo-beta-lactamase superfamily. Glyoxalase II family. Requires Zn(2+) as cofactor.

The protein localises to the endoplasmic reticulum membrane. It localises to the cell membrane. It carries out the reaction hexadecanoyl-CoA + H2O = hexadecanoate + CoA + H(+). The catalysed reaction is dodecanoyl-CoA + H2O = dodecanoate + CoA + H(+). The enzyme catalyses tetradecanoyl-CoA + H2O = tetradecanoate + CoA + H(+). It catalyses the reaction octadecanoyl-CoA + H2O = octadecanoate + CoA + H(+). It carries out the reaction a beta-lactam + H2O = a substituted beta-amino acid. Functionally, acyl-CoA thioesterases are a group of enzymes that catalyze the hydrolysis of acyl-CoAs to the free fatty acid and coenzyme A (CoASH), providing the potential to regulate intracellular levels of acyl-CoAs, free fatty acids and CoASH. Has an acyl-CoA thioesterase activity towards the long chain fatty acyl-CoA thioester palmitoyl-CoA (hexadecanoyl-CoA; C16:0-CoA). Displays a substrate preference for fatty acyl-CoAs with chain-lengths C12-C18. The polypeptide is Acyl-coenzyme A thioesterase MBLAC2 (MBLAC2) (Gallus gallus (Chicken)).